Reading from the N-terminus, the 334-residue chain is MNTEATHDQNEAQTTGVRLRNAREQLGLSQQAVAERLCLKVSTVRDIEEDKAPSDLASTFLRGYIRSYARLVHVPEEELLPGLEKQAPLRAAKVAPMQSFSLGKRRKKRDGWLMSFTWLVLFVVVGLTGAWWWQNHKAQQEEITTMADQSTAELNADKDSGQSVPLDTGAATSQDTTPAQTAPAPATPVDSTAATQTPAPTAAATQNTVVAPSQANVDTAATSAAPAATETPSALPTSQAGVAAPAADPNALVMNFTADCWLEVTDATGKKLFSGMQRKDGNLNLTGQAPYKLKIGAPAAVQIQYQGKPVDLSRFIRTNQVARLTLNAEPTPAQ.

At 1-111 the chain is on the cytoplasmic side; sequence MNTEATHDQN…LGKRRKKRDG (111 aa). The HTH cro/C1-type domain maps to 19–71; that stretch reads LRNAREQLGLSQQAVAERLCLKVSTVRDIEEDKAPSDLASTFLRGYIRSYARL. Positions 30 to 49 form a DNA-binding region, H-T-H motif; it reads QQAVAERLCLKVSTVRDIEE. A helical; Signal-anchor for type II membrane protein membrane pass occupies residues 112-132; that stretch reads WLMSFTWLVLFVVVGLTGAWW. Residues 133–334 lie on the Periplasmic side of the membrane; sequence WQNHKAQQEE…TLNAEPTPAQ (202 aa). The segment at 155 to 241 is disordered; that stretch reads NADKDSGQSV…PSALPTSQAG (87 aa). 2 stretches are compositionally biased toward low complexity: residues 170–211 and 219–241; these read AATS…TVVA and TAATSAAPAATETPSALPTSQAG.

It belongs to the RodZ family.

It is found in the cell inner membrane. Cytoskeletal protein that is involved in cell-shape control through regulation of the length of the long axis. The chain is Cytoskeleton protein RodZ from Salmonella agona (strain SL483).